A 199-amino-acid polypeptide reads, in one-letter code: Recombination protein RecR (199 aa).

The segment at 58 to 73 (CSVCYGLADSDPCHIC) adopts a C4-type zinc-finger fold. One can recognise a Toprim domain in the interval 81-176 (DVVCVVEQGT…KITRIASGVP (96 aa)).

Belongs to the RecR family.

In terms of biological role, may play a role in DNA repair. It seems to be involved in an RecBC-independent recombinational process of DNA repair. It may act with RecF and RecO. The chain is Recombination protein RecR from Desulfatibacillum aliphaticivorans.